Consider the following 263-residue polypeptide: L-aspartate dehydrogenase (263 aa).

Alanine 120 and asparagine 186 together coordinate NAD(+). Histidine 216 is an active-site residue.

Belongs to the L-aspartate dehydrogenase family.

The enzyme catalyses L-aspartate + NADP(+) + H2O = oxaloacetate + NH4(+) + NADPH + H(+). It catalyses the reaction L-aspartate + NAD(+) + H2O = oxaloacetate + NH4(+) + NADH + H(+). Its pathway is cofactor biosynthesis; NAD(+) biosynthesis; iminoaspartate from L-aspartate (dehydrogenase route): step 1/1. Specifically catalyzes the NAD or NADP-dependent dehydrogenation of L-aspartate to iminoaspartate. The polypeptide is L-aspartate dehydrogenase (Psychrobacter cryohalolentis (strain ATCC BAA-1226 / DSM 17306 / VKM B-2378 / K5)).